The following is a 561-amino-acid chain: Liver carboxylesterase 1F (561 aa).

The N-terminal stretch at 1–18 (MCLSFLFLVSLATCVVYG) is a signal peptide. N-linked (GlcNAc...) asparagine glycosylation is present at Asn79. Cysteines 87 and 116 form a disulfide. Ser221 serves as the catalytic Acyl-ester intermediate. The cysteines at positions 273 and 284 are disulfide-linked. Active-site charge relay system residues include Glu353 and His466. Residues 558–561 (HNEL) carry the Prevents secretion from ER motif.

Belongs to the type-B carboxylesterase/lipase family. Expressed in liver and kidney.

The protein resides in the lipid droplet. Its subcellular location is the cytoplasm. It is found in the cytosol. The protein localises to the endoplasmic reticulum. It localises to the microsome. The catalysed reaction is a carboxylic ester + H2O = an alcohol + a carboxylate + H(+). It catalyses the reaction all-trans-retinyl hexadecanoate + H2O = all-trans-retinol + hexadecanoate + H(+). Involved in the detoxification of xenobiotics and in the activation of ester and amide prodrugs. Hydrolyzes retinyl esters. Hydrolyzes p-nitrophenyl butyrate (PNPB), triacylglycerol and monoacylglycerol. Shows higher activity against PNPB, a short-chain fatty acid ester, than against triolein, a long-chain fatty acid ester. Shows no detectable activity against diacylglycerol, cholesterol ester or phospholipids. May play a role in adipocyte lipolysis. The sequence is that of Liver carboxylesterase 1F from Rattus norvegicus (Rat).